The following is a 494-amino-acid chain: Cardiolipin synthase (494 aa).

A run of 2 helical transmembrane segments spans residues 14-34 (IILN…AFTI) and 45-65 (IWAW…LYLL). PLD phosphodiesterase domains follow at residues 229–256 (MNNR…GDEY) and 407–434 (DNGF…DHRS). Residues His234, Lys236, Asp241, His412, Lys414, and Asp419 contribute to the active site.

Belongs to the phospholipase D family. Cardiolipin synthase subfamily.

It is found in the cell membrane. It catalyses the reaction 2 a 1,2-diacyl-sn-glycero-3-phospho-(1'-sn-glycerol) = a cardiolipin + glycerol. Functionally, catalyzes the reversible phosphatidyl group transfer from one phosphatidylglycerol molecule to another to form cardiolipin (CL) (diphosphatidylglycerol) and glycerol. This chain is Cardiolipin synthase (cls), found in Staphylococcus aureus (strain Mu50 / ATCC 700699).